We begin with the raw amino-acid sequence, 178 residues long: Mediator of RNA polymerase II transcription subunit 28 (178 aa).

A disordered region spans residues 1 to 44 (MAAPLGGMFSGQPPGPPQAPPGLPGQASLLQAAPGAPRPSSSTL). The segment covering 13–23 (PPGPPQAPPGL) has biased composition (pro residues). Residues 109–145 (QVIKEDVSELRNELQRKDALVQKHLTKLRHWQQVLED) are a coiled coil.

The protein belongs to the Mediator complex subunit 28 family. In terms of assembly, component of the Mediator complex, which is composed of MED1, MED4, MED6, MED7, MED8, MED9, MED10, MED11, MED12, MED13, MED13L, MED14, MED15, MED16, MED17, MED18, MED19, MED20, MED21, MED22, MED23, MED24, MED25, MED26, MED27, MED29, MED30, MED31, CCNC, CDK8 and CDC2L6/CDK11. The MED12, MED13, CCNC and CDK8 subunits form a distinct module termed the CDK8 module. Mediator containing the CDK8 module is less active than Mediator lacking this module in supporting transcriptional activation. Individual preparations of the Mediator complex lacking one or more distinct subunits have been variously termed ARC, CRSP, DRIP, PC2, SMCC and TRAP. Forms a ternary complex with NF2/merlin and GRB2. Binds to actin. As to expression, widely expressed. Highly expressed in vascular tissues such as placenta, testis and liver.

It localises to the nucleus. It is found in the cytoplasm. Its subcellular location is the membrane. Functionally, component of the Mediator complex, a coactivator involved in the regulated transcription of nearly all RNA polymerase II-dependent genes. Mediator functions as a bridge to convey information from gene-specific regulatory proteins to the basal RNA polymerase II transcription machinery. Mediator is recruited to promoters by direct interactions with regulatory proteins and serves as a scaffold for the assembly of a functional preinitiation complex with RNA polymerase II and the general transcription factors. May be part of a complex containing NF2/merlin that participates in cellular signaling to the actin cytoskeleton downstream of tyrosine kinase signaling pathways. The sequence is that of Mediator of RNA polymerase II transcription subunit 28 (MED28) from Homo sapiens (Human).